A 475-amino-acid chain; its full sequence is UDP-glycosyltransferase 84A4 (475 aa).

His20 (proton acceptor) is an active-site residue. An anthocyanidin is bound at residue His20. UDP-alpha-D-glucose contacts are provided by Gln342, His357, Trp360, Asn361, Ser362, and Glu365. An an anthocyanidin-binding site is contributed by Gly380. Residues Asp381 and Gln382 each contribute to the UDP-alpha-D-glucose site.

This sequence belongs to the UDP-glycosyltransferase family.

It catalyses the reaction (E)-4-coumarate + UDP-alpha-D-glucose = 4-O-(beta-D-glucosyl)-trans-4-coumarate + UDP + H(+). The enzyme catalyses (E)-ferulate + UDP-alpha-D-glucose = 1-O-[(E)-feruloyl]-beta-D-glucose + UDP. The catalysed reaction is (E)-caffeate + UDP-alpha-D-glucose = 1-O-[(E)-caffeoyl]-beta-D-glucose + UDP. It carries out the reaction (E)-sinapate + UDP-alpha-D-glucose = 1-O-(trans-sinapoyl)-beta-D-glucose + UDP. It catalyses the reaction (E)-cinnamate + UDP-alpha-D-glucose = 1-O-(trans-cinnamoyl)-beta-D-glucose + UDP. Its function is as follows. UDP-glucosyltransferase that forms glucose esters with phenylpropanoids. Glucosylates 4-coumarate, ferulate, caffeate, sinapate and cinnamate. This Arabidopsis thaliana (Mouse-ear cress) protein is UDP-glycosyltransferase 84A4.